Reading from the N-terminus, the 154-residue chain is MAARLCCQLDPARDVLCLRPVGAESRGRPFSGPFGTLSSPSPSAVSTDHGAHLSLRGLPVCAFSSAGPCALRFTSARRMETTVNAHQFLPKVLYKRTLGLSVMSTTDLEAYFKDCLFKDWEELGEETRLMIFVLGGCRHKLVCAPAPCNFFTSA.

Residues 68 to 117 form a mitochondrial targeting sequence region; it reads PCALRFTSARRMETTVNAHQFLPKVLYKRTLGLSVMSTTDLEAYFKDCLF.

This sequence belongs to the orthohepadnavirus protein X family. May form homodimer. May interact with host CEBPA, CFLAR, CREB1, DDB1, E4F1, HBXIP, HSPD1/HSP60, NFKBIA, POLR2E and SMAD4. Interacts with host SMC5-SMC6 complex and induces its degradation. Interacts with host TRPC4AP; leading to prevent ubiquitination of TRPC4AP. Interacts with host PLSCR1; this interaction promotes ubiquitination and degradation of HBx and impairs HBx-mediated cell proliferation. Post-translationally, a fraction may be phosphorylated in insect cells and HepG2 cells, a human hepatoblastoma cell line. Phosphorylated in vitro by host protein kinase C or mitogen-activated protein kinase. N-acetylated in insect cells.

It localises to the host cytoplasm. It is found in the host nucleus. Its subcellular location is the host mitochondrion. In terms of biological role, multifunctional protein that plays a role in silencing host antiviral defenses and promoting viral transcription. Does not seem to be essential for HBV infection. May be directly involved in development of cirrhosis and liver cancer (hepatocellular carcinoma). Most of cytosolic activities involve modulation of cytosolic calcium. The effect on apoptosis is controversial depending on the cell types in which the studies have been conducted. May induce apoptosis by localizing in mitochondria and causing loss of mitochondrial membrane potential. May also modulate apoptosis by binding host CFLAR, a key regulator of the death-inducing signaling complex (DISC). Promotes viral transcription by using the host E3 ubiquitin ligase DDB1 to target the SMC5-SMC6 complex to proteasomal degradation. This host complex would otherwise bind to viral episomal DNA, and prevents its transcription. Moderately stimulates transcription of many different viral and cellular transcription elements. Promoters and enhancers stimulated by HBx contain DNA binding sites for NF-kappa-B, AP-1, AP-2, c-EBP, ATF/CREB, or the calcium-activated factor NF-AT. The chain is Protein X from Homo sapiens (Human).